A 218-amino-acid chain; its full sequence is Probable GTP-binding protein EngB (218 aa).

The EngB-type G domain occupies 31-205 (SGIEIAFAGR…EQKVTSWYAQ (175 aa)). GTP contacts are provided by residues 39-46 (GRSNAGKS), 66-70 (GRTQL), 84-87 (DLPG), 151-154 (TKAD), and 184-186 (FSS). Mg(2+) is bound by residues Ser46 and Thr68.

Belongs to the TRAFAC class TrmE-Era-EngA-EngB-Septin-like GTPase superfamily. EngB GTPase family. It depends on Mg(2+) as a cofactor.

Functionally, necessary for normal cell division and for the maintenance of normal septation. This is Probable GTP-binding protein EngB from Psychromonas ingrahamii (strain DSM 17664 / CCUG 51855 / 37).